The chain runs to 282 residues: MVLIGVLASLLILQLSYSKSLDDGAKESAYDDEIQQSSWGNSTVNTTLTETVVIQLIMGGSECYKSKHPFLVYLYNSAGFFCSGTLLNHEWVLTAAHCNRDDIQLKLGVHNVHVHYEDEQIRVPKEKLCCLSTKNCTQWSQDIMLIRLNSSVNNSKHIEPLSLPSRPPSMGSDCTVMGWGTITSPKVTYPKVPHCVDIKILHNPVCQAAYPTMSRKNILCAGVLEGGKDSCKGDSGGPLICDGQIQGIVSWGRFPCAQLLEPGVYTKVFDYIDWIKGIIAGN.

The signal sequence occupies residues 1 to 18; sequence MVLIGVLASLLILQLSYS. Residues 19–56 constitute a propeptide that is removed on maturation; sequence KSLDDGAKESAYDDEIQQSSWGNSTVNTTLTETVVIQL. 2 N-linked (GlcNAc...) asparagine glycosylation sites follow: Asn-41 and Asn-45. The region spanning 57-280 is the Peptidase S1 domain; the sequence is IMGGSECYKS…YIDWIKGIIA (224 aa). Intrachain disulfides connect Cys-63-Cys-195, Cys-82-Cys-98, Cys-174-Cys-241, Cys-206-Cys-220, and Cys-231-Cys-256. His-97 functions as the Charge relay system in the catalytic mechanism. An N-linked (GlcNAc...) asparagine glycan is attached at Asn-135. Catalysis depends on Asp-142, which acts as the Charge relay system. 2 N-linked (GlcNAc...) asparagine glycosylation sites follow: Asn-149 and Asn-153. Ser-235 acts as the Charge relay system in catalysis.

This sequence belongs to the peptidase S1 family. Snake venom subfamily. As to quaternary structure, monomer. As to expression, expressed by the venom gland.

The protein resides in the secreted. Functionally, snake venom serine protease that may act in the hemostasis system of the prey. This Bungarus multicinctus (Many-banded krait) protein is Snake venom serine protease BmSP.